We begin with the raw amino-acid sequence, 195 residues long: Probable peroxygenase 4 (195 aa).

Positions 14–49 (EEDNFLQRHVAFFDRNKDGIVYPSETFQGFRAIGCG) constitute an EF-hand domain. Residue H22 coordinates heme. 4 residues coordinate Ca(2+): D27, N29, D31, and E38. The Proline-knot motif lies at 70-79 (PGKGFSIWFP). Position 177 is a phosphoserine (S177).

This sequence belongs to the caleosin family. In terms of assembly, homodimer. Heme b serves as cofactor. It depends on Ca(2+) as a cofactor. As to expression, expressed in roots, leaves, stems, shoots, flowers and germinated seeds. Barely detected in dry seeds prior to germination. Preferentially expressed in vascular bundles and in guard cells.

The protein resides in the lipid droplet. It carries out the reaction RH + ROOH = ROH + ROH.. In terms of biological role, calcium-binding peroxygenase involved in the degradation of storage lipid in oil bodies. May be involved in the interaction between oil bodies and vacuoles during seed germination. Acts as a negative regulator of abscisic acid responses in non-seed tissues. This chain is Probable peroxygenase 4 (PXG4), found in Arabidopsis thaliana (Mouse-ear cress).